The sequence spans 103 residues: MQLFLRINMAQIIRATEFVRSFSDIMNRVYYKGESFDVQKGNHIVARITPAETKPSIAVRDLEEAFKNGPHLDPEDADQFMKDIEEIRRSTRQDIKKLVERWD.

Antitoxin component of a type II toxin-antitoxin (TA) system. Upon expression in E.coli neutralizes the effect of cognate toxin VapC1, partially inhibits the RNase activity of VapC1 in vitro. The sequence is that of Antitoxin VapB1 (vapB1) from Rickettsia felis (strain ATCC VR-1525 / URRWXCal2) (Rickettsia azadi).